Reading from the N-terminus, the 1756-residue chain is Protein TIC 214 (1756 aa).

6 helical membrane passes run 18 to 38 (VSGP…LPFG), 54 to 74 (GYGI…FLSM), 79 to 99 (IYAA…YMFF), 128 to 148 (LFMD…NPVL), 163 to 183 (ISFM…LTIF), and 210 to 230 (FSLL…LPFL). The interval 1469 to 1504 (KNKQVEDGQDKNGQVEDQDGQDQDGQVEDQQTDGKK) is disordered. Over residues 1471–1482 (KQVEDGQDKNGQ) the composition is skewed to basic and acidic residues. Residues 1484-1499 (EDQDGQDQDGQVEDQQ) show a composition bias toward acidic residues.

This sequence belongs to the TIC214 family. In terms of assembly, part of the Tic complex.

It is found in the plastid. Its subcellular location is the chloroplast inner membrane. Its function is as follows. Involved in protein precursor import into chloroplasts. May be part of an intermediate translocation complex acting as a protein-conducting channel at the inner envelope. This is Protein TIC 214 from Pinus thunbergii (Japanese black pine).